The chain runs to 214 residues: Large ribosomal subunit protein uL4c (214 aa).

Residues Lys43–Gly80 are disordered. Positions Gly64–Gly75 are enriched in basic residues.

The protein belongs to the universal ribosomal protein uL4 family. In terms of assembly, part of the 50S ribosomal subunit.

It localises to the plastid. It is found in the chloroplast. Functionally, probably binds the 23S rRNA. The protein is Large ribosomal subunit protein uL4c (rpl4) of Porphyra purpurea (Red seaweed).